A 419-amino-acid polypeptide reads, in one-letter code: UDP-N-acetylglucosamine 1-carboxyvinyltransferase (419 aa).

23–24 (KN) provides a ligand contact to phosphoenolpyruvate. Arg92 is a UDP-N-acetyl-alpha-D-glucosamine binding site. The Proton donor role is filled by Cys116. Cys116 carries the 2-(S-cysteinyl)pyruvic acid O-phosphothioketal modification. Residues 121–125 (RPVDL), 161–164 (KVSV), Asp306, and Ile328 contribute to the UDP-N-acetyl-alpha-D-glucosamine site.

It belongs to the EPSP synthase family. MurA subfamily.

It is found in the cytoplasm. It carries out the reaction phosphoenolpyruvate + UDP-N-acetyl-alpha-D-glucosamine = UDP-N-acetyl-3-O-(1-carboxyvinyl)-alpha-D-glucosamine + phosphate. It participates in cell wall biogenesis; peptidoglycan biosynthesis. Functionally, cell wall formation. Adds enolpyruvyl to UDP-N-acetylglucosamine. This is UDP-N-acetylglucosamine 1-carboxyvinyltransferase from Vibrio cholerae serotype O1 (strain ATCC 39541 / Classical Ogawa 395 / O395).